Here is a 1856-residue protein sequence, read N- to C-terminus: Zinc metalloprotease ZmpC (1856 aa).

The signal sequence occupies residues 1–42 (MSRKSIGEKRHSFSMRKLSVGLVSVTVSSFFLMSQGIQSVSA). The propeptide occupies 43-95 (DNMESPIHYKYMTEGKLTDEEKSLLVEALPQLAEESDDTYYLVYRSQQFLPNT). Positions 92–96 (LPNTG) match the LPXTG sorting signal motif. At T95 the chain carries Pentaglycyl murein peptidoglycan amidated threonine. 2 helical membrane passes run 97 to 117 (FNPTVGTFLFTAGLSLLVLLV) and 130 to 152 (FLLLTSMGVQLLPASAFGLTSQI). Residues 153-1856 (LSAYNSQLSI…TDDFRNSIYK (1704 aa)) are Extracellular-facing. 2 stretches are compositionally biased toward polar residues: residues 254–267 (NLSSNDSFASQVEQ) and 286–295 (NPVSATTVQS). Residues 254 to 362 (NLSSNDSFAS…GEAAVREEEP (109 aa)) are disordered. Basic and acidic residues-rich tracts occupy residues 322-334 (PGHEGEAAVREDL) and 351-361 (HEGEAAVREEE). Residues 417–496 (ALEVTTRNRT…NEVVKVGTLV (80 aa)) form the G5 domain. A Zn(2+)-binding site is contributed by H1502. E1503 is an active-site residue. Residues H1506 and E1526 each contribute to the Zn(2+) site.

The protein belongs to the peptidase M26 family. It depends on Zn(2+) as a cofactor. In terms of processing, the Gram-positive cell-wall anchor motif LPXTG is located in the N-terminal part, in contrast to such motifs in other known streptococcal and staphylococcal proteins. The protease could be cleaved by the sortase and anchored in the membrane via the two potential N-terminal transmembrane domains, whereas the propeptide located prior to the LPXTG motif would remain attached to the cell wall peptidoglycan by an amide bond.

It is found in the secreted. The protein localises to the cell wall. Its subcellular location is the membrane. Its function is as follows. Zinc metalloproteinase that specifically cleaves human matrix metalloproteinase 9 (MMP-9), leading to its activation. May play a role in pneumococcal virulence and pathogenicity in the lung. The chain is Zinc metalloprotease ZmpC (zmpC) from Streptococcus pneumoniae serotype 4 (strain ATCC BAA-334 / TIGR4).